The sequence spans 81 residues: Sec-independent protein translocase protein TatA (81 aa).

A helical transmembrane segment spans residues 1 to 21 (MGGISVWQLLIIAVIVVLLFG). Residues 42 to 81 (AMSDEDSAKNEKDADFEPKSLEKQQQKEAAPETKKDKEQA) form a disordered region.

The protein belongs to the TatA/E family. As to quaternary structure, the Tat system comprises two distinct complexes: a TatABC complex, containing multiple copies of TatA, TatB and TatC subunits, and a separate TatA complex, containing only TatA subunits. Substrates initially bind to the TatABC complex, which probably triggers association of the separate TatA complex to form the active translocon.

The protein resides in the cell inner membrane. Its function is as follows. Part of the twin-arginine translocation (Tat) system that transports large folded proteins containing a characteristic twin-arginine motif in their signal peptide across membranes. TatA could form the protein-conducting channel of the Tat system. This Vibrio parahaemolyticus serotype O3:K6 (strain RIMD 2210633) protein is Sec-independent protein translocase protein TatA.